The sequence spans 466 residues: Catalase ifgD (466 aa).

A disordered region spans residues 1 to 22; that stretch reads MAPNYAKKCPVMGKAPSSGHSS. His-48 is an active-site residue. Tyr-337 contributes to the heme binding site.

Belongs to the catalase family. Heme is required as a cofactor.

The protein operates within alkaloid biosynthesis; ergot alkaloid biosynthesis. Catalase; part of the gene cluster that mediates the biosynthesis of isofumigaclavines, fungal ergot alkaloids. The tryptophan dimethylallyltransferase ifgA catalyzes the first step of ergot alkaloid biosynthesis by condensing dimethylallyl diphosphate (DMAP) and tryptophan to form 4-dimethylallyl-L-tryptophan. The second step is catalyzed by the methyltransferase ifgB that methylates 4-dimethylallyl-L-tryptophan in the presence of S-adenosyl-L-methionine, resulting in the formation of N-methyl-dimethylallyl-L-tryptophan. The catalase ifgD and the FAD-dependent oxidoreductase ifgC then transform N-methyl-dimethylallyl-L-tryptophan to chanoclavine-I which is further oxidized by ifgE in the presence of NAD(+), resulting in the formation of chanoclavine-I aldehyde. The chanoclavine-I aldehyde reductases ifgG and/or fgaOx3 reduce chanoclavine-I aldehyde to dihydrochanoclavine-I aldehyde that spontaneously dehydrates to form 6,8-dimethyl-6,7-didehydroergoline. The festuclavine dehydrogenases ifgF1 and/or ifgF2 then catalyze the reduction of 6,8-dimethyl-6,7-didehydroergoline to form festuclavine. Hydrolysis of festuclavine by a yet undetermined cytochrome P450 monooxygenase (called ifgH) then leads to the formation of isofumigaclavine B which is in turn acetylated by ifgI to isofumigaclavine A. Penicillium roqueforti has interestingly at least two sets of genes for the consumption of chanoclavine-I aldehyde on three different loci, the OYEs ifgG/fgaOx3 and the festuclavine synthase homologs ifgF1/ifgF2. The reason for the duplication of these genes is unclear, probably to ensure the conversion of chanoclavine-I aldehyde by differential gene expression under various environmental conditions. The polypeptide is Catalase ifgD (Penicillium roqueforti (strain FM164)).